The following is a 362-amino-acid chain: Molybdopterin synthase catalytic subunit (362 aa).

Substrate contacts are provided by residues histidine 101–arginine 102, lysine 117, and lysine 124–glutamate 126.

It belongs to the MoaE family. MOCS2B subfamily. Heterotetramer; composed of 2 small (Mocs2A) and 2 large (Mocs2B) subunits.

Its subcellular location is the cytoplasm. It carries out the reaction 2 [molybdopterin-synthase sulfur-carrier protein]-C-terminal-Gly-aminoethanethioate + cyclic pyranopterin phosphate + H2O = molybdopterin + 2 [molybdopterin-synthase sulfur-carrier protein]-C-terminal Gly-Gly + 2 H(+). It participates in cofactor biosynthesis; molybdopterin biosynthesis. In terms of biological role, catalytic subunit of the molybdopterin synthase complex, a complex that catalyzes the conversion of precursor Z into molybdopterin. Acts by mediating the incorporation of 2 sulfur atoms from thiocarboxylated Mocs2A into precursor Z to generate a dithiolene group. This Drosophila grimshawi (Hawaiian fruit fly) protein is Molybdopterin synthase catalytic subunit.